A 270-amino-acid chain; its full sequence is 4-hydroxy-tetrahydrodipicolinate reductase (270 aa).

Residues 11-16 (GASGRM) and E37 each bind NAD(+). NADP(+) is bound at residue R38. NAD(+) contacts are provided by residues 101–103 (GTT) and 125–128 (APNM). The active-site Proton donor/acceptor is the H158. H159 lines the (S)-2,3,4,5-tetrahydrodipicolinate pocket. The Proton donor role is filled by K162. 168-169 (GT) is a (S)-2,3,4,5-tetrahydrodipicolinate binding site.

Belongs to the DapB family.

It localises to the cytoplasm. It carries out the reaction (S)-2,3,4,5-tetrahydrodipicolinate + NAD(+) + H2O = (2S,4S)-4-hydroxy-2,3,4,5-tetrahydrodipicolinate + NADH + H(+). It catalyses the reaction (S)-2,3,4,5-tetrahydrodipicolinate + NADP(+) + H2O = (2S,4S)-4-hydroxy-2,3,4,5-tetrahydrodipicolinate + NADPH + H(+). It participates in amino-acid biosynthesis; L-lysine biosynthesis via DAP pathway; (S)-tetrahydrodipicolinate from L-aspartate: step 4/4. Catalyzes the conversion of 4-hydroxy-tetrahydrodipicolinate (HTPA) to tetrahydrodipicolinate. The chain is 4-hydroxy-tetrahydrodipicolinate reductase from Shewanella amazonensis (strain ATCC BAA-1098 / SB2B).